Consider the following 59-residue polypeptide: Small, acid-soluble spore protein H (59 aa).

This sequence belongs to the SspH family.

The protein resides in the spore core. The chain is Small, acid-soluble spore protein H from Alkaliphilus metalliredigens (strain QYMF).